The primary structure comprises 119 residues: Large ribosomal subunit protein bL20 (119 aa).

Belongs to the bacterial ribosomal protein bL20 family.

Binds directly to 23S ribosomal RNA and is necessary for the in vitro assembly process of the 50S ribosomal subunit. It is not involved in the protein synthesizing functions of that subunit. This is Large ribosomal subunit protein bL20 from Polaromonas sp. (strain JS666 / ATCC BAA-500).